We begin with the raw amino-acid sequence, 334 residues long: Glyceraldehyde-3-phosphate dehydrogenase (334 aa).

NAD(+)-binding positions include 12-13, Asp-34, and Arg-79; that span reads RI. Residues 150 to 152, Thr-181, 210 to 211, and Arg-233 each bind D-glyceraldehyde 3-phosphate; these read SCT and TG. The Nucleophile role is filled by Cys-151. Residue Asn-315 coordinates NAD(+).

The protein belongs to the glyceraldehyde-3-phosphate dehydrogenase family. As to quaternary structure, homotetramer.

Its subcellular location is the cytoplasm. It carries out the reaction D-glyceraldehyde 3-phosphate + phosphate + NAD(+) = (2R)-3-phospho-glyceroyl phosphate + NADH + H(+). The protein operates within carbohydrate degradation; glycolysis; pyruvate from D-glyceraldehyde 3-phosphate: step 1/5. This Wickerhamomyces ciferrii (strain ATCC 14091 / BCRC 22168 / CBS 111 / JCM 3599 / NBRC 0793 / NRRL Y-1031 F-60-10) (Yeast) protein is Glyceraldehyde-3-phosphate dehydrogenase (GPD).